We begin with the raw amino-acid sequence, 236 residues long: MRPDGRKNDELRPIKIEKNFIKNADGSVLIELGNTRVICTASIENKVPPFLKDQKKGWITAEYGMLPRSTPVRMLRESTSGRVGGRTHEIQRLIGRTLRAVVDLEKLGERTIWIDCDVIEADGGTRTASITGGYIALVEAVKKAMNAGMITENPIKDSIAAISVGIVLGEPRLDLCYAEDSQAEVDMNIVMTGSGKFIEIQGTAEIYPFSKENLLQLLSLAEKGIREIIRVINNLD.

Residues R86 and 124–126 (GTR) contribute to the phosphate site.

This sequence belongs to the RNase PH family. As to quaternary structure, homohexameric ring arranged as a trimer of dimers.

It carries out the reaction tRNA(n+1) + phosphate = tRNA(n) + a ribonucleoside 5'-diphosphate. Its function is as follows. Phosphorolytic 3'-5' exoribonuclease that plays an important role in tRNA 3'-end maturation. Removes nucleotide residues following the 3'-CCA terminus of tRNAs; can also add nucleotides to the ends of RNA molecules by using nucleoside diphosphates as substrates, but this may not be physiologically important. Probably plays a role in initiation of 16S rRNA degradation (leading to ribosome degradation) during starvation. This Thermodesulfovibrio yellowstonii (strain ATCC 51303 / DSM 11347 / YP87) protein is Ribonuclease PH.